Consider the following 166-residue polypeptide: Protein adg1 (166 aa).

Positions 1-22 (MFLRSIFQTLCAVSFLAGSVFA) are cleaved as a signal peptide.

The protein resides in the endoplasmic reticulum. The sequence is that of Protein adg1 (adg1) from Schizosaccharomyces pombe (strain 972 / ATCC 24843) (Fission yeast).